Consider the following 161-residue polypeptide: MTTSFWRIATDARTYEADDLSGAGAKITGGRWNEVGVAIVYAASSRALACLETVVHLNSGGLPLNRYLVEIEVPDEVLASAEVATPGNLPVGWDAEPAGRVSISFGSQWAQSQRTALLLVPSVIVPEETNLLINPAHPDAKGIKARKVRKWLYDPRMIRKA.

It belongs to the MbcT/ParT/Res family. In terms of assembly, homodimer, forms heterotetrameric ParS(2)-ParT(2) complexes. Consumes NAD(+) and auto-ADP-ribosylates on the tryptic fragment Ala-47-Arg-66 in vitro. Also auto-ADP-ribosylates using NADP(+).

Toxic component of a type II toxin-antitoxin (TA) system. Expression in E.coli inhibits cell growth; bacteriostasis is neutralized by expression of cognate antitoxin ParS. ADP-ribosylates E.coli ribose-phosphate pyrophosphokinase (RPPK, prs) using NAD(+) in vitro; ADP-ribosylates RPPK on 'Lys-182' and 'Ser-202'. Cannot use NADP(+). Also auto-ADP-ribosylates in vitro; in the presence of RPPK auto-ADP-ribosylation decreases. The protein is Prs ADP-ribosylating toxin of Sphingobium sp. (strain YBL2).